The primary structure comprises 800 residues: Cell division cycle 5-like protein (800 aa).

2 consecutive HTH myb-type domains span residues 1-56 (MRNV…DPSI) and 57-106 (KKTE…DEVQ). DNA-binding regions (H-T-H motif) lie at residues 29–52 (WARI…HEWL) and 80–102 (WKTI…NRLL). 4 disordered regions span residues 109-186 (QDNE…KRKF), 334-378 (YEKL…NIRT), 399-445 (QTPL…KQSL), and 571-610 (NKTF…NDND). The segment covering 113–122 (NGGGSGGGGT) has biased composition (gly residues). The segment covering 133 to 142 (NDPRRLRMGD) has biased composition (basic and acidic residues). The segment covering 340–351 (SGSGGGSGGVGV) has biased composition (gly residues). Over residues 361 to 376 (TASISSTAANNNTNNI) the composition is skewed to low complexity. Composition is skewed to polar residues over residues 409–445 (NVSQ…KQSL) and 573–584 (TFPNDSITPSST). The span at 592–601 (DNHHHHHDDI) shows a compositional bias: basic and acidic residues. Coiled-coil stretches lie at residues 621–700 (NTEL…KIKN) and 748–800 (VALK…LSIF).

It belongs to the CEF1 family. Component of the precatalytic, catalytic and postcatalytic spliceosome complexes.

The protein resides in the nucleus. Its subcellular location is the cytoplasm. Functionally, DNA-binding protein involved in cell cycle control. May act as a transcription activator. Plays a role in pre-mRNA splicing as core component of precatalytic, catalytic and postcatalytic spliceosomal complexes. May also play a role in the response to DNA damage (DDR). The chain is Cell division cycle 5-like protein (cdc5l) from Dictyostelium discoideum (Social amoeba).